Reading from the N-terminus, the 329-residue chain is Malate dehydrogenase (329 aa).

12 to 18 is a binding site for NAD(+); it reads GAAGQIG. 2 residues coordinate substrate: Arg95 and Arg101. Residues Asn108, Gln115, and 132–134 contribute to the NAD(+) site; that span reads VGN. Substrate is bound by residues Asn134 and Arg165. The active-site Proton acceptor is the His190.

Belongs to the LDH/MDH superfamily. MDH type 2 family.

It carries out the reaction (S)-malate + NAD(+) = oxaloacetate + NADH + H(+). Its function is as follows. Catalyzes the reversible oxidation of malate to oxaloacetate. The polypeptide is Malate dehydrogenase (Janthinobacterium sp. (strain Marseille) (Minibacterium massiliensis)).